Consider the following 414-residue polypeptide: Probable isoprenylcysteine alpha-carbonyl methylesterase ICME (414 aa).

The disordered stretch occupies residues 1–54; sequence MQPASPVSGDAGPVAEAVPPRGAPQVLVRRRSVPFSPDSPLAPGSRGGGERRST. Transmembrane regions (helical) follow at residues 90-110 and 145-165; these read LAALIIYAILLMPGFIRVGYY and VVAFVTGGAWIIGYKAWGALL. Residues 151-153 and 222-224 contribute to the substrate site; these read GGA and QSA. Residues Ser223, Asp323, and His355 contribute to the active site.

The protein belongs to the AB hydrolase superfamily. Isoprenylcysteine methylesterase family.

Its subcellular location is the endoplasmic reticulum membrane. It is found in the golgi apparatus membrane. The catalysed reaction is [protein]-C-terminal S-[(2E,6E)-farnesyl]-L-cysteine methyl ester + H2O = [protein]-C-terminal S-[(2E,6E)-farnesyl]-L-cysteine + methanol + H(+). Functionally, catalyzes the demethylation of isoprenylcysteine methylesters. This Oryza sativa subsp. japonica (Rice) protein is Probable isoprenylcysteine alpha-carbonyl methylesterase ICME (IMCE).